The chain runs to 706 residues: D-(-)-3-hydroxybutyrate oligomer hydrolase (706 aa).

Residues 1–27 (MTIIIAGKNTLTLTSLAAAVLALGACG) form the signal peptide. Catalysis depends on Ser-311, which acts as the Charge relay system.

This sequence belongs to the D-(-)-3-hydroxybutyrate oligomer hydrolase family.

It localises to the secreted. It carries out the reaction (3R)-hydroxybutanoate dimer + H2O = 2 (R)-3-hydroxybutanoate + H(+). It functions in the pathway lipid metabolism; butanoate metabolism. Its function is as follows. Participates in the degradation of poly-3-hydroxybutyrate (PHB). It works downstream of poly(3-hydroxybutyrate) depolymerase, hydrolyzing D(-)-3-hydroxybutyrate oligomers of various length (3HB-oligomers) into 3HB-monomers. This Polaromonas naphthalenivorans (strain CJ2) protein is D-(-)-3-hydroxybutyrate oligomer hydrolase.